Reading from the N-terminus, the 418-residue chain is CinA-like protein (418 aa).

The protein belongs to the CinA family.

The polypeptide is CinA-like protein (Leptospira interrogans serogroup Icterohaemorrhagiae serovar Lai (strain 56601)).